A 363-amino-acid chain; its full sequence is Flagellar P-ring protein (363 aa).

The N-terminal stretch at 1–20 is a signal peptide; that stretch reads MKIKVLLAVALLAMTVPVKA.

Belongs to the FlgI family. As to quaternary structure, the basal body constitutes a major portion of the flagellar organelle and consists of four rings (L,P,S, and M) mounted on a central rod.

The protein localises to the periplasm. The protein resides in the bacterial flagellum basal body. Assembles around the rod to form the L-ring and probably protects the motor/basal body from shearing forces during rotation. The sequence is that of Flagellar P-ring protein from Shewanella amazonensis (strain ATCC BAA-1098 / SB2B).